Reading from the N-terminus, the 218-residue chain is 1-Cys peroxiredoxin (218 aa).

The 161-residue stretch at 4 to 164 (LTIGDTIPDL…VLRVVESLQK (161 aa)) folds into the Thioredoxin domain. Cysteine 46 functions as the Cysteine sulfenic acid (-SOH) intermediate in the catalytic mechanism. The short motif at 194–217 (KEMFPQGFKTADLPSKKEYLRFTN) is the Bipartite nuclear localization signal element.

Belongs to the peroxiredoxin family. Prx6 subfamily.

Its subcellular location is the nucleus. The protein localises to the cytoplasm. It catalyses the reaction a hydroperoxide + [thioredoxin]-dithiol = an alcohol + [thioredoxin]-disulfide + H2O. Its function is as follows. Thiol-specific peroxidase that catalyzes the reduction of hydrogen peroxide and organic hydroperoxides to water and alcohols, respectively. Seems to contribute to the inhibition of germination during stress. The polypeptide is 1-Cys peroxiredoxin (Medicago truncatula (Barrel medic)).